A 103-amino-acid chain; its full sequence is Putative truncated guanine nucleotide exchange factor YLL017W (103 aa).

Residues 26–97 (QPIDVVECTY…PPSFYTVHSK (72 aa)) enclose the SH3 domain.

This chain is Putative truncated guanine nucleotide exchange factor YLL017W, found in Saccharomyces cerevisiae (strain ATCC 204508 / S288c) (Baker's yeast).